A 201-amino-acid polypeptide reads, in one-letter code: Cutinase (201 aa).

Positions 1-20 (MKTSAQQLLSLLLLPLSAIA) are cleaved as a signal peptide. Cysteine 31 and cysteine 105 are oxidised to a cystine. Serine 116 (nucleophile) is an active-site residue. An intrachain disulfide couples cysteine 164 to cysteine 171. The active site involves aspartate 168. The active-site Proton donor/acceptor is histidine 181.

This sequence belongs to the cutinase family. Post-translationally, the 2 disulfide bonds play a critical role in holding the catalytic residues in juxta-position; reduction of the disulfide bridges results in the complete inactivation of the enzyme.

The protein resides in the secreted. The enzyme catalyses cutin + H2O = cutin monomers.. Its function is as follows. Catalyzes the hydrolysis of complex carboxylic polyesters found in the cell wall of plants. Degrades cutin, a macromolecule that forms the structure of the plant cuticle. Allows pathogenic fungi to penetrate through the cuticular barrier into the host plant during the initial stage of fungal infection. This chain is Cutinase (CUT1), found in Monilinia fructicola (Brown rot fungus).